A 60-amino-acid chain; its full sequence is Large ribosomal subunit protein bL32 (60 aa).

A disordered region spans residues 1–23 (MAVPKRKKSKSRRNMHRSHHAIK).

It belongs to the bacterial ribosomal protein bL32 family.

This Wolbachia sp. subsp. Brugia malayi (strain TRS) protein is Large ribosomal subunit protein bL32.